The following is a 307-amino-acid chain: Transaldolase (307 aa).

K125 (schiff-base intermediate with substrate) is an active-site residue.

It belongs to the transaldolase family. Type 1 subfamily. In terms of assembly, homodimer.

The protein localises to the cytoplasm. It catalyses the reaction D-sedoheptulose 7-phosphate + D-glyceraldehyde 3-phosphate = D-erythrose 4-phosphate + beta-D-fructose 6-phosphate. The protein operates within carbohydrate degradation; pentose phosphate pathway; D-glyceraldehyde 3-phosphate and beta-D-fructose 6-phosphate from D-ribose 5-phosphate and D-xylulose 5-phosphate (non-oxidative stage): step 2/3. In terms of biological role, transaldolase is important for the balance of metabolites in the pentose-phosphate pathway. This is Transaldolase from Pseudomonas paraeruginosa (strain DSM 24068 / PA7) (Pseudomonas aeruginosa (strain PA7)).